The primary structure comprises 1150 residues: ATP-dependent helicase/deoxyribonuclease subunit B (1150 aa).

8–15 is a binding site for ATP; sequence GRAGSGKS. Residues Cys786, Cys1106, Cys1109, and Cys1115 each contribute to the [4Fe-4S] cluster site.

Belongs to the helicase family. AddB/RexB type 1 subfamily. As to quaternary structure, heterodimer of AddA and AddB. Mg(2+) is required as a cofactor. Requires [4Fe-4S] cluster as cofactor.

The heterodimer acts as both an ATP-dependent DNA helicase and an ATP-dependent, dual-direction single-stranded exonuclease. Recognizes the chi site generating a DNA molecule suitable for the initiation of homologous recombination. The AddB subunit has 5' -&gt; 3' nuclease activity but not helicase activity. The polypeptide is ATP-dependent helicase/deoxyribonuclease subunit B (Clostridium botulinum (strain Langeland / NCTC 10281 / Type F)).